Here is a 177-residue protein sequence, read N- to C-terminus: Large ribosomal subunit protein uL6 (177 aa).

This sequence belongs to the universal ribosomal protein uL6 family. Part of the 50S ribosomal subunit.

In terms of biological role, this protein binds to the 23S rRNA, and is important in its secondary structure. It is located near the subunit interface in the base of the L7/L12 stalk, and near the tRNA binding site of the peptidyltransferase center. The protein is Large ribosomal subunit protein uL6 of Methylococcus capsulatus (strain ATCC 33009 / NCIMB 11132 / Bath).